The sequence spans 298 residues: 4-diphosphocytidyl-2-C-methyl-D-erythritol kinase (298 aa).

K15 is an active-site residue. P102–S112 serves as a coordination point for ATP. D142 is an active-site residue.

This sequence belongs to the GHMP kinase family. IspE subfamily.

The enzyme catalyses 4-CDP-2-C-methyl-D-erythritol + ATP = 4-CDP-2-C-methyl-D-erythritol 2-phosphate + ADP + H(+). It participates in isoprenoid biosynthesis; isopentenyl diphosphate biosynthesis via DXP pathway; isopentenyl diphosphate from 1-deoxy-D-xylulose 5-phosphate: step 3/6. In terms of biological role, catalyzes the phosphorylation of the position 2 hydroxy group of 4-diphosphocytidyl-2C-methyl-D-erythritol. The polypeptide is 4-diphosphocytidyl-2-C-methyl-D-erythritol kinase (Hyphomonas neptunium (strain ATCC 15444)).